A 670-amino-acid polypeptide reads, in one-letter code: ATP-dependent DNA helicase Rep (670 aa).

The 277-residue stretch at Met1–Ser277 folds into the UvrD-like helicase ATP-binding domain. Residues Ala22 to Thr29 and Arg275 each bind ATP. The UvrD-like helicase C-terminal domain maps to Gly278–Gly562.

It belongs to the helicase family. UvrD subfamily. In terms of assembly, homodimer.

The catalysed reaction is Couples ATP hydrolysis with the unwinding of duplex DNA by translocating in the 3'-5' direction.. It catalyses the reaction ATP + H2O = ADP + phosphate + H(+). Its function is as follows. Rep helicase is a single-stranded DNA-dependent ATPase involved in DNA replication; it can initiate unwinding at a nick in the DNA. It binds to the single-stranded DNA and acts in a progressive fashion along the DNA in the 3' to 5' direction. This chain is ATP-dependent DNA helicase Rep, found in Buchnera aphidicola subsp. Baizongia pistaciae (strain Bp).